The primary structure comprises 238 residues: 7-carboxy-7-deazaguanine synthase (238 aa).

Substrate contacts are provided by residues 14-16 (IQG) and Arg29. A Radical SAM core domain is found at 20–234 (VVGQKTMFIR…PQLHALVWGN (215 aa)). [4Fe-4S] cluster contacts are provided by Cys33, Cys37, and Cys40. Mg(2+) is bound at residue Ser42. Ser80 serves as a coordination point for substrate. S-adenosyl-L-methionine is bound by residues Gly82 and 126 to 128 (SPK).

The protein belongs to the radical SAM superfamily. 7-carboxy-7-deazaguanine synthase family. As to quaternary structure, homodimer. Requires [4Fe-4S] cluster as cofactor. S-adenosyl-L-methionine is required as a cofactor. Mg(2+) serves as cofactor.

The catalysed reaction is 6-carboxy-5,6,7,8-tetrahydropterin + H(+) = 7-carboxy-7-deazaguanine + NH4(+). It participates in purine metabolism; 7-cyano-7-deazaguanine biosynthesis. Functionally, catalyzes the complex heterocyclic radical-mediated conversion of 6-carboxy-5,6,7,8-tetrahydropterin (CPH4) to 7-carboxy-7-deazaguanine (CDG), a step common to the biosynthetic pathways of all 7-deazapurine-containing compounds. This chain is 7-carboxy-7-deazaguanine synthase, found in Bacillus cereus (strain ATCC 14579 / DSM 31 / CCUG 7414 / JCM 2152 / NBRC 15305 / NCIMB 9373 / NCTC 2599 / NRRL B-3711).